The sequence spans 478 residues: E3 ubiquitin-protein ligase makorin-1 (478 aa).

3 consecutive C3H1-type zinc fingers follow at residues 51-78 (WTKQ…HDLS), 80-107 (SQSA…HTKP), and 204-231 (EMKK…HGDA). A makorin-type Cys-His region spans residues 232–259 (CDMCGLQVLHPVDAAQRSQHIKSCIEAH). The RING-type zinc-finger motif lies at 277–331 (CGICMEVVYEKANPSERRFGILSNCNHTYCLKCIRKWRSAKQFESKIIKSCPECR). The C3H1-type 4 zinc finger occupies 360 to 389 (AMSNKPCRYFDEGRGSCPFGGNCFYKHAYP).

In terms of assembly, interacts with p53/TP53 and CDKN1A. Interacts with TERT, modulating telomere length homeostasis. Auto-ubiquitinated; which leads to proteasomal degradation.

It catalyses the reaction S-ubiquitinyl-[E2 ubiquitin-conjugating enzyme]-L-cysteine + [acceptor protein]-L-lysine = [E2 ubiquitin-conjugating enzyme]-L-cysteine + N(6)-ubiquitinyl-[acceptor protein]-L-lysine.. It functions in the pathway protein modification; protein ubiquitination. E3 ubiquitin ligase catalyzing the covalent attachment of ubiquitin moieties onto substrate proteins. These substrates include FILIP1, p53/TP53, CDKN1A and TERT. Keeps cells alive by suppressing p53/TP53 under normal conditions, but stimulates apoptosis by repressing CDKN1A under stress conditions. Acts as a negative regulator of telomerase. Has negative and positive effects on RNA polymerase II-dependent transcription. This Notamacropus eugenii (Tammar wallaby) protein is E3 ubiquitin-protein ligase makorin-1 (MKRN1).